A 163-amino-acid chain; its full sequence is MRIEKCYFCSGPIYPGHGMMFVRNDCKVFRFCKSKCHKNFKKKRNPRKVRWTKAFRKAAGKELTVDNSFEFEKRRNEPVKYQRELWNKTIDAMKRVEEIKQKRQAKFIMNRLKKNKELQKVQDIKEVKQNIHLIRAPLAGKGKQLEEKMVQQLQEDVDMEEAS.

It belongs to the eukaryotic ribosomal protein eL24 family. In terms of assembly, associated with nucleolar and cytoplasmic pre-60S particles. At the end of biogenesis it dissociates from cytoplasmic pre-60S particles and is likely to be exchanged for its ribosomal homolog, RPL24.

Its subcellular location is the nucleus. The protein localises to the nucleolus. Functionally, involved in the biogenesis of the 60S ribosomal subunit. Ensures the docking of GTPBP4/NOG1 to pre-60S particles. The chain is Probable ribosome biogenesis protein RLP24 (Rsl24d1) from Mus musculus (Mouse).